A 156-amino-acid chain; its full sequence is Protein-export protein SecB (156 aa).

The protein belongs to the SecB family. As to quaternary structure, homotetramer, a dimer of dimers. One homotetramer interacts with 1 SecA dimer.

It localises to the cytoplasm. In terms of biological role, one of the proteins required for the normal export of preproteins out of the cell cytoplasm. It is a molecular chaperone that binds to a subset of precursor proteins, maintaining them in a translocation-competent state. It also specifically binds to its receptor SecA. The sequence is that of Protein-export protein SecB from Pectobacterium carotovorum subsp. carotovorum (strain PC1).